A 403-amino-acid polypeptide reads, in one-letter code: Lipase lipl-5 (403 aa).

An N-terminal signal peptide occupies residues 1-18 (MWRFAVFLAAFFVQDVVG). Asn-64 is a glycosylation site (N-linked (GlcNAc...) asparagine). The Nucleophile role is filled by Ser-167. Asn-271 carries N-linked (GlcNAc...) asparagine glycosylation. Catalysis depends on charge relay system residues Asp-343 and His-375.

It belongs to the AB hydrolase superfamily. Lipase family.

The protein localises to the lysosome lumen. Its subcellular location is the secreted. Lipase involved in lipid homeostasis. Regulates mitochondrial lipid composition, in particular cardiolipins and coenzyme Q-9 levels, in response to nutrient availability. Does not affect global triglyceride levels in response to nutrient availability. However, in coelomocytes, specifically promotes triglyceride catabolism and lifespan extension in response to nutrient deprivation. The protein is Lipase lipl-5 of Caenorhabditis elegans.